Reading from the N-terminus, the 105-residue chain is Hydrogen cyanide synthase subunit HcnA (105 aa).

One can recognise a 2Fe-2S ferredoxin-type domain in the interval 16–97; it reads ADMTISLNGQ…GMQVQTLSNR (82 aa). Cys-60, Cys-65, Cys-68, and Cys-81 together coordinate [2Fe-2S] cluster.

As to quaternary structure, heterotrimer of HcnA, HcnB and HcnC.

The protein resides in the cell membrane. It carries out the reaction glycine + 2 A = hydrogen cyanide + 2 AH2 + CO2. A three-component membrane-bound flavoenzyme that catalyzes the formation of hydrogen cyanide, a secondary metabolite, by transfer of electrons to a cyanide-resistant branch of the aerobic respiratory chain. Contributes to suppression of black root rot of tobacco. The protein is Hydrogen cyanide synthase subunit HcnA of Pseudomonas protegens (strain DSM 19095 / LMG 27888 / CFBP 6595 / CHA0).